The chain runs to 209 residues: Large ribosomal subunit protein uL3 (209 aa).

The tract at residues 126–148 (HGQSRGPMAHGSRYHRRPGSMGP) is disordered.

It belongs to the universal ribosomal protein uL3 family. In terms of assembly, part of the 50S ribosomal subunit. Forms a cluster with proteins L14 and L19.

One of the primary rRNA binding proteins, it binds directly near the 3'-end of the 23S rRNA, where it nucleates assembly of the 50S subunit. This is Large ribosomal subunit protein uL3 from Listeria monocytogenes serotype 4b (strain CLIP80459).